The sequence spans 496 residues: MTMDPTKFRPSSSHDTTVTTTNAGAPVWNDNEALTVGPRGPILLEDYHLIEKVAHFARERIPERVVHARGASAKGFFECTHDVTSLTCADFLRAPGVRTPVIVRFSTVIHERGSPETIRDPRGFAVKFYTREGNWDLLGNNFPVFFIRDGIKFPDVIHAFKPNPRSHVQEYWRVFDFLSHLPESLHTFFFLFDDVGVPSDYRHMEGFGVNTYTFVSAAGKAQYVKFHWKPTCGVRCILTDEEAALVGGRNHSHATQDLYDSIAAGSFPEWTLYVQVMDPDTEEQYDFDPLDDTKTWPEDLLPLRPVGRLVLDRNVDNFFNENEQLAFGPGLVVPGIYYSDDKMLQCRVFAYADTQRYRLGPNYLMLPVNAPRCAHHNNHYDGAMNFMHRDEEVDYYPSRHAPLRQAAPPTPLPPRPVAGRREKATIRKPNDFKQPGERYRSWDADRQDRFVRRFADSLGHPKVSQELRSIWIDLLAKCDASLGMKIATRLNMKANM.

Positions 1 to 25 are disordered; sequence MTMDPTKFRPSSSHDTTVTTTNAGA. Residues 9–23 are compositionally biased toward polar residues; sequence RPSSSHDTTVTTTNA. Catalysis depends on residues His67 and Asn140. Tyr351 is a heme binding site. The interval 402 to 422 is disordered; sequence PLRQAAPPTPLPPRPVAGRRE.

The protein belongs to the catalase family. In terms of assembly, homotetramer. The cofactor is heme. As to expression, leaf mesophyll cells, pericarp, seedling roots and the coleoptile.

The protein localises to the mitochondrion. It catalyses the reaction 2 H2O2 = O2 + 2 H2O. Occurs in almost all aerobically respiring organisms and serves to protect cells from the toxic effects of hydrogen peroxide. Its levels are highest in the light period and are lowest in the dark period, hence it may be important for scavenging hydrogen peroxide at night, rather than during the day. The sequence is that of Catalase isozyme 3 (CAT3) from Zea mays (Maize).